The primary structure comprises 312 residues: tRNA dimethylallyltransferase (312 aa).

11-18 is an ATP binding site; that stretch reads GLTATGKT. 13–18 is a binding site for substrate; sequence TATGKT. Residues 36–39 are interaction with substrate tRNA; that stretch reads DSMC.

The protein belongs to the IPP transferase family. As to quaternary structure, monomer. The cofactor is Mg(2+).

It catalyses the reaction adenosine(37) in tRNA + dimethylallyl diphosphate = N(6)-dimethylallyladenosine(37) in tRNA + diphosphate. Its function is as follows. Catalyzes the transfer of a dimethylallyl group onto the adenine at position 37 in tRNAs that read codons beginning with uridine, leading to the formation of N6-(dimethylallyl)adenosine (i(6)A). The protein is tRNA dimethylallyltransferase of Caldicellulosiruptor saccharolyticus (strain ATCC 43494 / DSM 8903 / Tp8T 6331).